We begin with the raw amino-acid sequence, 212 residues long: Guanylate kinase (212 aa).

The Guanylate kinase-like domain occupies 7–187 (GLLIVLSGPS…AADRIIAIIR (181 aa)). ATP is bound at residue 14 to 21 (GPSGVGKA).

The protein belongs to the guanylate kinase family.

It localises to the cytoplasm. It carries out the reaction GMP + ATP = GDP + ADP. Essential for recycling GMP and indirectly, cGMP. The polypeptide is Guanylate kinase (Onion yellows phytoplasma (strain OY-M)).